The primary structure comprises 435 residues: N-lysine methyltransferase SMYD2-A (435 aa).

The 235-residue stretch at 7–241 (EGTERFLSPG…PEEEIFNSYI (235 aa)) folds into the SET domain. An S-adenosyl-L-methionine-binding site is contributed by 17-19 (KGR). Zn(2+)-binding residues include Cys52, Cys55, Cys65, Cys68, Cys74, Cys78, His86, and Cys90. An MYND-type zinc finger spans residues 52-90 (CECCFTRKEGLSKCGKCKQAYYCNVECQRGDWPMHKLEC). Residues His137, 206 to 207 (NH), and 258 to 260 (YFF) contribute to the S-adenosyl-L-methionine site.

The protein belongs to the class V-like SAM-binding methyltransferase superfamily.

The protein resides in the cytoplasm. The protein localises to the cytosol. It is found in the nucleus. It carries out the reaction L-lysyl(4)-[histone H3] + 3 S-adenosyl-L-methionine = N(6),N(6),N(6)-trimethyl-L-lysyl(4)-[histone H3] + 3 S-adenosyl-L-homocysteine + 3 H(+). The enzyme catalyses L-lysyl-[protein] + S-adenosyl-L-methionine = N(6)-methyl-L-lysyl-[protein] + S-adenosyl-L-homocysteine + H(+). In terms of biological role, protein-lysine N-methyltransferase that methylates both histones and non-histone proteins, including p53/TP53 and RB1. Specifically trimethylates histone H3 'Lys-4' (H3K4me3) in vivo. The activity requires interaction with HSP90alpha. Shows even higher methyltransferase activity on p53/TP53. Monomethylates 'Lys-370' of p53/TP53, leading to decreased DNA-binding activity and subsequent transcriptional regulation activity of p53/TP53. Monomethylates RB1 at 'Lys-860'. The chain is N-lysine methyltransferase SMYD2-A (smyd2a) from Danio rerio (Zebrafish).